We begin with the raw amino-acid sequence, 455 residues long: Rhodopsin (455 aa).

The Extracellular portion of the chain corresponds to 1 to 34 (MVESTTLVNQTWWYNPTVDIHPHWAKFDPIPDAV). Asparagine 9 carries an N-linked (GlcNAc...) asparagine glycan. A helical membrane pass occupies residues 35–59 (YYSVGIFIGVVGIIGILGNGVVIYL). Topologically, residues 60–71 (FSKTKSLQTPAN) are cytoplasmic. Residues 72–98 (MFIINLAMSDLSFSAINGFPLKTISAF) form a helical membrane-spanning segment. Residues 99-110 (MKKWIFGKVACQ) lie on the Extracellular side of the membrane. A disulfide bridge links cysteine 109 with cysteine 187. Residues 111 to 132 (LYGLLGGIFGFMSINTMAMISI) form a helical membrane-spanning segment. Positions 133–135 (DRY) match the 'Ionic lock' involved in activated form stabilization motif. Residues 133–152 (DRYNVIGRPMAASKKMSHRR) lie on the Cytoplasmic side of the membrane. Residues 153–173 (AFLMIIFVWMWSIVWSVGPVF) traverse the membrane as a helical segment. Topologically, residues 174-200 (NWGAYVPEGILTSCSFDYLSTDPSTRS) are extracellular. Residues 201–225 (FILCMYFCGFMLPIIIIAFCYFNIV) traverse the membrane as a helical segment. Residues 226 to 262 (MSVSNHEKEMAAMAKRLNAKELRKAQAGASAEMKLAK) are Cytoplasmic-facing. The chain crosses the membrane as a helical span at residues 263 to 284 (ISMVIITQFMLSWSPYAIIALL). At 285 to 294 (AQFGPAEWVT) the chain is on the extracellular side. A helical membrane pass occupies residues 295 to 316 (PYAAELPVLFAKASAIHNPIVY). The residue at position 306 (lysine 306) is an N6-(retinylidene)lysine. The Cytoplasmic portion of the chain corresponds to 317–455 (SVSHPKFREA…QGVDNQAYQA (139 aa)). Residues cysteine 337 and cysteine 338 are each lipidated (S-palmitoyl cysteine). A compositionally biased stretch (low complexity) spans 378–387 (QKMQAQQAAY). The interval 378–455 (QKMQAQQAAY…QGVDNQAYQA (78 aa)) is disordered. A compositionally biased stretch (pro residues) spans 388-433 (QPPPPPQGYPPQGYPPQGAYPPPQGYPPQGYPPQGYPPQGYPPQGA). Repeat copies occupy residues 395-399 (GYPPQ), 400-404 (GYPPQ), 412-416 (GYPPQ), 417-421 (GYPPQ), 422-426 (GYPPQ), and 427-431 (GYPPQ). Residues 395 to 431 (GYPPQGYPPQGAYPPPQGYPPQGYPPQGYPPQGYPPQ) form a 6 X 5 AA repeats of G-Y-P-P-Q region.

Belongs to the G-protein coupled receptor 1 family. Opsin subfamily. Contains one covalently linked retinal chromophore. Upon light absorption, the covalently bound 11-cis-retinal is converted to all-trans-retinal. After hydrolysis of the Schiff base and release of the covalently bound all-trans-retinal, active rhodopsin is regenerated by binding of a fresh molecule of 11-cis-retinal.

It is found in the cell projection. Its subcellular location is the rhabdomere membrane. Functionally, photoreceptor required for image-forming vision at low light intensity. Light-induced isomerization of 11-cis to all-trans retinal triggers a conformational change that activates signaling via G-proteins. Signaling mediates the activation of phospholipase C. Subsequent receptor phosphorylation mediates displacement of the bound G-protein alpha subunit by arrestin and terminates signaling. This chain is Rhodopsin (RHO), found in Enteroctopus dofleini (North Pacific giant octopus).